We begin with the raw amino-acid sequence, 1037 residues long: Caspase recruitment domain-containing protein 6 (1037 aa).

Ala-2 carries the post-translational modification N-acetylalanine. Positions 3 to 94 (TESTPSEIIE…QSAAICGLRH (92 aa)) constitute a CARD domain. Ser-154 bears the Phosphoserine mark. Disordered stretches follow at residues 235 to 270 (DPEH…TSLS), 669 to 704 (VSSG…PIQE), and 887 to 1037 (RTSH…GGKH). Residues 242 to 261 (DGEEDFENSETTEFSGEEPS) are compositionally biased toward acidic residues. A compositionally biased stretch (low complexity) spans 690 to 699 (LKSSSKSQAL). Polar residues-rich tracts occupy residues 911–928 (ASQQ…SNPA), 938–954 (KSSQ…TVKH), and 963–984 (VPSQ…QTKP). Ser-985 carries the post-translational modification Phosphoserine. Pro residues predominate over residues 994-1012 (PSQPWPPQSKPSQPRPPQP). Positions 1023 to 1037 (KAHHSKAGQKRGGKH) are enriched in basic residues.

Functionally, may be involved in apoptosis. The protein is Caspase recruitment domain-containing protein 6 (CARD6) of Homo sapiens (Human).